We begin with the raw amino-acid sequence, 473 residues long: ATP synthase subunit beta, chloroplastic (473 aa).

Residue 172-179 (GGAGVGKT) coordinates ATP.

It belongs to the ATPase alpha/beta chains family. As to quaternary structure, F-type ATPases have 2 components, CF(1) - the catalytic core - and CF(0) - the membrane proton channel. CF(1) has five subunits: alpha(3), beta(3), gamma(1), delta(1), epsilon(1). CF(0) has four main subunits: a(1), b(1), b'(1) and c(9-12).

It localises to the plastid. The protein localises to the chloroplast thylakoid membrane. It catalyses the reaction ATP + H2O + 4 H(+)(in) = ADP + phosphate + 5 H(+)(out). In terms of biological role, produces ATP from ADP in the presence of a proton gradient across the membrane. The catalytic sites are hosted primarily by the beta subunits. This chain is ATP synthase subunit beta, chloroplastic, found in Pteridium esculentum (Bracken fern).